The primary structure comprises 189 residues: MNKLTILFLILALISVIYAQHKFPSSSEDSSSNDSNSQVTGSQSYSGSQSDSNSGSESHTINTGSSYSGSGSGSSGISGGSGSGSGSGSGSGSGSGSGSGAVSGSQSGSGAVSGSQSGSGAVSGSQSGVQTGSQSGAGSASGAFTGNPSGSQSQEINTGSSYSGSGSGAPTGAATGSGSGSGSSGTVYY.

An N-terminal signal peptide occupies residues 1–19; the sequence is MNKLTILFLILALISVIYA. Positions 24–189 are disordered; sequence PSSSEDSSSN…GSGSSGTVYY (166 aa). Over residues 25-69 the composition is skewed to low complexity; it reads SSSEDSSSNDSNSQVTGSQSYSGSQSDSNSGSESHTINTGSSYSG. Residues 70 to 101 show a composition bias toward gly residues; it reads SGSGSSGISGGSGSGSGSGSGSGSGSGSGSGA. The segment covering 102–142 has biased composition (low complexity); that stretch reads VSGSQSGSGAVSGSQSGSGAVSGSQSGVQTGSQSGAGSASG. Positions 144–157 are enriched in polar residues; it reads FTGNPSGSQSQEIN. Residues 165–183 are compositionally biased toward gly residues; sequence SGSGAPTGAATGSGSGSGS.

This is an uncharacterized protein from Dictyostelium discoideum (Social amoeba).